The primary structure comprises 210 residues: Thiamine-phosphate synthase (210 aa).

4-amino-2-methyl-5-(diphosphooxymethyl)pyrimidine is bound by residues 36 to 40 and N68; that span reads QLRIK. D69 and D88 together coordinate Mg(2+). Residue S107 participates in 4-amino-2-methyl-5-(diphosphooxymethyl)pyrimidine binding. 133 to 135 is a 2-[(2R,5Z)-2-carboxy-4-methylthiazol-5(2H)-ylidene]ethyl phosphate binding site; sequence TQT. K136 contributes to the 4-amino-2-methyl-5-(diphosphooxymethyl)pyrimidine binding site. 2-[(2R,5Z)-2-carboxy-4-methylthiazol-5(2H)-ylidene]ethyl phosphate-binding positions include G165 and 185-186; that span reads VS.

The protein belongs to the thiamine-phosphate synthase family. Requires Mg(2+) as cofactor.

It catalyses the reaction 2-[(2R,5Z)-2-carboxy-4-methylthiazol-5(2H)-ylidene]ethyl phosphate + 4-amino-2-methyl-5-(diphosphooxymethyl)pyrimidine + 2 H(+) = thiamine phosphate + CO2 + diphosphate. The catalysed reaction is 2-(2-carboxy-4-methylthiazol-5-yl)ethyl phosphate + 4-amino-2-methyl-5-(diphosphooxymethyl)pyrimidine + 2 H(+) = thiamine phosphate + CO2 + diphosphate. The enzyme catalyses 4-methyl-5-(2-phosphooxyethyl)-thiazole + 4-amino-2-methyl-5-(diphosphooxymethyl)pyrimidine + H(+) = thiamine phosphate + diphosphate. It functions in the pathway cofactor biosynthesis; thiamine diphosphate biosynthesis; thiamine phosphate from 4-amino-2-methyl-5-diphosphomethylpyrimidine and 4-methyl-5-(2-phosphoethyl)-thiazole: step 1/1. In terms of biological role, condenses 4-methyl-5-(beta-hydroxyethyl)thiazole monophosphate (THZ-P) and 2-methyl-4-amino-5-hydroxymethyl pyrimidine pyrophosphate (HMP-PP) to form thiamine monophosphate (TMP). This chain is Thiamine-phosphate synthase, found in Cronobacter sakazakii (strain ATCC BAA-894) (Enterobacter sakazakii).